Consider the following 410-residue polypeptide: Elongation factor Tu, chloroplastic (410 aa).

A tr-type G domain is found at 10-215 (KPHVNIGTIG…IVDEYIPTPQ (206 aa)). The segment at 19 to 26 (GHVDHGKT) is G1. A GTP-binding site is contributed by 19-26 (GHVDHGKT). Thr26 is a Mg(2+) binding site. The interval 61–65 (GITIN) is G2. A G3 region spans residues 82–85 (DCPG). Residues 82–86 (DCPGH) and 137–140 (NKAD) each bind GTP. Residues 137 to 140 (NKAD) are G4. Positions 175–177 (SAL) are G5.

This sequence belongs to the TRAFAC class translation factor GTPase superfamily. Classic translation factor GTPase family. EF-Tu/EF-1A subfamily.

The protein resides in the plastid. It localises to the chloroplast. It catalyses the reaction GTP + H2O = GDP + phosphate + H(+). Functionally, GTP hydrolase that promotes the GTP-dependent binding of aminoacyl-tRNA to the A-site of ribosomes during protein biosynthesis. In Cyanidioschyzon merolae (strain NIES-3377 / 10D) (Unicellular red alga), this protein is Elongation factor Tu, chloroplastic (tufA).